The primary structure comprises 269 residues: Formamidopyrimidine-DNA glycosylase (269 aa).

Residue Pro-2 is the Schiff-base intermediate with DNA of the active site. The Proton donor role is filled by Glu-3. The Proton donor; for beta-elimination activity role is filled by Lys-57. The DNA site is built by His-90, Arg-109, and Lys-150. An FPG-type zinc finger spans residues 235-269 (QVYGRKGEPCRVCGTPIVATKHAQRATFYCRQCQK). Catalysis depends on Arg-259, which acts as the Proton donor; for delta-elimination activity.

The protein belongs to the FPG family. Monomer. The cofactor is Zn(2+).

It catalyses the reaction Hydrolysis of DNA containing ring-opened 7-methylguanine residues, releasing 2,6-diamino-4-hydroxy-5-(N-methyl)formamidopyrimidine.. The enzyme catalyses 2'-deoxyribonucleotide-(2'-deoxyribose 5'-phosphate)-2'-deoxyribonucleotide-DNA = a 3'-end 2'-deoxyribonucleotide-(2,3-dehydro-2,3-deoxyribose 5'-phosphate)-DNA + a 5'-end 5'-phospho-2'-deoxyribonucleoside-DNA + H(+). Functionally, involved in base excision repair of DNA damaged by oxidation or by mutagenic agents. Acts as a DNA glycosylase that recognizes and removes damaged bases. Has a preference for oxidized purines, such as 7,8-dihydro-8-oxoguanine (8-oxoG). Has AP (apurinic/apyrimidinic) lyase activity and introduces nicks in the DNA strand. Cleaves the DNA backbone by beta-delta elimination to generate a single-strand break at the site of the removed base with both 3'- and 5'-phosphates. This Escherichia coli (strain 55989 / EAEC) protein is Formamidopyrimidine-DNA glycosylase.